Reading from the N-terminus, the 188-residue chain is ATP synthase subunit b 1 (188 aa).

A helical transmembrane segment spans residues 7–27 (LSVLALAMLAANPAFAAGGGI).

This sequence belongs to the ATPase B chain family. As to quaternary structure, F-type ATPases have 2 components, F(1) - the catalytic core - and F(0) - the membrane proton channel. F(1) has five subunits: alpha(3), beta(3), gamma(1), delta(1), epsilon(1). F(0) has three main subunits: a(1), b(2) and c(10-14). The alpha and beta chains form an alternating ring which encloses part of the gamma chain. F(1) is attached to F(0) by a central stalk formed by the gamma and epsilon chains, while a peripheral stalk is formed by the delta and b chains.

The protein resides in the cell inner membrane. In terms of biological role, f(1)F(0) ATP synthase produces ATP from ADP in the presence of a proton or sodium gradient. F-type ATPases consist of two structural domains, F(1) containing the extramembraneous catalytic core and F(0) containing the membrane proton channel, linked together by a central stalk and a peripheral stalk. During catalysis, ATP synthesis in the catalytic domain of F(1) is coupled via a rotary mechanism of the central stalk subunits to proton translocation. Its function is as follows. Component of the F(0) channel, it forms part of the peripheral stalk, linking F(1) to F(0). This is ATP synthase subunit b 1 from Roseobacter denitrificans (strain ATCC 33942 / OCh 114) (Erythrobacter sp. (strain OCh 114)).